A 465-amino-acid polypeptide reads, in one-letter code: Antithrombin-III (465 aa).

Residues 1 to 32 form the signal peptide; that stretch reads MISNGIGTVTAGKRSICLLPLLLIGLWGCVTC. 2 disulfides stabilise this stretch: cysteine 41–cysteine 161 and cysteine 54–cysteine 128. At threonine 64 the chain carries Phosphothreonine. A Phosphoserine modification is found at serine 69. A heparin-binding site is contributed by tryptophan 82. The N-linked (GlcNAc...) asparagine glycan is linked to asparagine 129. Arginine 162 contributes to the heparin binding site. N-linked (GlcNAc...) asparagine glycosylation occurs at asparagine 168. Arginine 178 contributes to the heparin binding site. 2 N-linked (GlcNAc...) asparagine glycosylation sites follow: asparagine 188 and asparagine 225. The cysteines at positions 280 and 463 are disulfide-linked.

This sequence belongs to the serpin family. Forms protease inhibiting heterodimer with TMPRSS7. Phosphorylated by FAM20C in the extracellular medium. In terms of tissue distribution, plasma.

Its subcellular location is the secreted. It localises to the extracellular space. Most important serine protease inhibitor in plasma that regulates the blood coagulation cascade. AT-III inhibits thrombin, matriptase-3/TMPRSS7, as well as factors IXa, Xa and XIa. Its inhibitory activity is greatly enhanced in the presence of heparin. This is Antithrombin-III (SERPINC1) from Bos taurus (Bovine).